The chain runs to 1482 residues: Cystic fibrosis transmembrane conductance regulator (1482 aa).

Residues 1–77 are Cytoplasmic-facing; that stretch reads MQRSPLEKAS…KLINALQRCF (77 aa). Residues 78-98 form a helical membrane-spanning segment; that stretch reads FWRFTFYGILLYLGEVTKAIQ. Positions 81-365 constitute an ABC transmembrane type-1 1 domain; the sequence is FTFYGILLYL…WAVQTWYDSL (285 aa). Residues 99–122 are Extracellular-facing; the sequence is PLLLGRIIASYDPDNKMERSIAIY. The helical transmembrane segment at 123–146 threads the bilayer; the sequence is LGIGLCLLFIMRTLLLHPAIFGLH. Over 147–195 the chain is Cytoplasmic; that stretch reads HIGMQMRIALFSLIYKKTLKLSSRVLDKISIGQLVSLLSNNLNKFDEGL. A helical membrane pass occupies residues 196–216; the sequence is ALAHFVWIAPLQVMLLMGLLW. The Extracellular segment spans residues 217–222; sequence ELLQAS. Residues 223–243 form a helical membrane-spanning segment; the sequence is AFCGLAFLIVLALLQAGLGRM. Residues 244-298 lie on the Cytoplasmic side of the membrane; the sequence is MMKYRDQRAGKINERLVITSEMIENIQSVKAYCWEEAMEKMIENLRQTELRLTRK. The helical transmembrane segment at 299 to 319 threads the bilayer; that stretch reads AAYVRYVNSSAFFFSGFFVVF. Topologically, residues 320–339 are extracellular; it reads LSVLPYALIKGIILRKIFTT. A helical membrane pass occupies residues 340–358; that stretch reads ISFCIVLRMAVTRQFPWAV. Over 359–859 the chain is Cytoplasmic; the sequence is QTWYDSLGAI…YLRYITVHKN (501 aa). Residues Trp401, 458 to 465, and Gln493 contribute to the ATP site; that span reads GSTGAGKT. In terms of domain architecture, ABC transporter 1 spans 423–646; sequence SGDNRLFFSN…RPDFSSKLMG (224 aa). Cys524 carries the S-palmitoyl cysteine lipid modification. A phosphoserine mark is found at Ser549 and Ser660. The segment at 654–832 is disordered R region; it reads SAERRNSILT…EEINEEDLKE (179 aa). Position 670 is a phosphoserine; by PKA (Ser670). Ser686 is modified (phosphoserine). A Glycyl lysine isopeptide (Lys-Gly) (interchain with G-Cter in ubiquitin) cross-link involves residue Lys688. Residues Ser700 and Ser712 each carry the phosphoserine modification. Residue Thr717 is modified to Phosphothreonine. A phosphoserine mark is found at Ser737, Ser768, Ser791, Ser796, and Ser814. Residues 860 to 880 traverse the membrane as a helical segment; that stretch reads LIFVLIWCLVIFLAEVAASLV. The ABC transmembrane type-1 2 domain occupies 860–1156; the sequence is LIFVLIWCLV…AVNSSIDVDS (297 aa). Topologically, residues 881–919 are extracellular; that stretch reads AFWLIEKTRPQDKGNSTRSTNNTSPVIITSTSAFYMFYI. Residues Asn895 and Asn901 are each glycosylated (N-linked (GlcNAc...) asparagine). A discontinuously helical transmembrane segment spans residues 920–940; that stretch reads YVGVADSLLALGFLRGLPLVH. The Cytoplasmic portion of the chain corresponds to 941–991; the sequence is TLITVSKILHQKMLHSVLHAPMSTLNTLKAGAILNRFSKDIAILDDLLPLT. A helical membrane pass occupies residues 992-1012; the sequence is IFDFIQLVLIVIGAVVVVSIL. Over 1013–1014 the chain is Extracellular; it reads KP. Residues 1015 to 1035 form a helical membrane-spanning segment; it reads YIFLAAVPVIIAFVILRAYFL. The Cytoplasmic segment spans residues 1036–1096; that stretch reads QTSQQLKQLE…TATWFLYLST (61 aa). Residues 1097-1117 form a helical membrane-spanning segment; it reads LRWFQMRIEMIFVVFFVAVTF. Topologically, residues 1118–1131 are extracellular; the sequence is ISILTTGEGEGTVG. Residues 1132 to 1152 form a helical membrane-spanning segment; that stretch reads IILTLAMNIMSTLQWAVNSSI. The Cytoplasmic portion of the chain corresponds to 1153 to 1482; that stretch reads DVDSLMRSVS…AEEEVQDTRL (330 aa). The region spanning 1212-1445 is the ABC transporter 2 domain; the sequence is ITVKDLTAKY…KSLFQQAISP (234 aa). ATP-binding positions include Tyr1221 and 1246–1253; that span reads GRTGSGKS. The segment at 1388–1482 is interaction with GORASP2; the sequence is RALKQAFADC…AEEEVQDTRL (95 aa). Cys1397 is lipidated: S-palmitoyl cysteine. Phosphoserine is present on residues Ser1446 and Ser1458. The tract at residues 1454–1482 is disordered; the sequence is QRSSSKHRSRAQITALKEEAEEEVQDTRL. A compositionally biased stretch (acidic residues) spans 1472-1482; sequence EAEEEVQDTRL. Residues 1480–1482 carry the PDZ-binding motif; sequence TRL.

The protein belongs to the ABC transporter superfamily. ABCC family. CFTR transporter (TC 3.A.1.202) subfamily. As to quaternary structure, monomer; does not require oligomerization for channel activity. May form oligomers in the membrane. Interacts with SLC26A3, SLC26A6 and NHERF1. Interacts with SHANK2. Interacts with MYO6. Interacts (via C-terminus) with GOPC (via PDZ domain); this promotes CFTR internalization and thereby decreases channel activity. Interacts with SLC4A7 through NHERF1. Found in a complex with MYO5B and RAB11A. Interacts with ANO1. Interacts with SLC26A8. Interacts with AHCYL1; the interaction increases CFTR activity. Interacts with CSE1L. The core-glycosylated form interacts with GORASP2 (via PDZ GRASP-type 1 domain) in respone to ER stress. Interacts with MARCHF2; the interaction leads to CFTR ubiqtuitination and degradation. Interacts with ADGRG2. In terms of processing, N-glycosylated. Post-translationally, phosphorylated; cAMP treatment promotes phosphorylation and activates the channel. Dephosphorylation decreases the ATPase activity (in vitro). Phosphorylation at PKA sites activates the channel. Phosphorylation at PKC sites enhances the response to phosphorylation by PKA. Phosphorylated by AMPK; this inhibits channel activity. Ubiquitinated, leading to its degradation in the lysosome. Deubiquitination by USP10 in early endosomes enhances its endocytic recycling to the cell membrane. Ubiquitinated by RNF185 during ER stress. Ubiquitinated by MARCHF2.

The protein resides in the apical cell membrane. It is found in the early endosome membrane. It localises to the cell membrane. Its subcellular location is the recycling endosome membrane. The protein localises to the endoplasmic reticulum membrane. The protein resides in the nucleus. The enzyme catalyses ATP + H2O + closed Cl(-) channel = ADP + phosphate + open Cl(-) channel.. The catalysed reaction is chloride(in) = chloride(out). It carries out the reaction hydrogencarbonate(in) = hydrogencarbonate(out). It catalyses the reaction ATP + H2O = ADP + phosphate + H(+). In terms of biological role, epithelial ion channel that plays an important role in the regulation of epithelial ion and water transport and fluid homeostasis. Mediates the transport of chloride ions across the cell membrane. Possesses an intrinsic ATPase activity and utilizes ATP to gate its channel; the passive flow of anions through the channel is gated by cycles of ATP binding and hydrolysis by the ATP-binding domains. The ion channel is also permeable to HCO(3)(-); selectivity depends on the extracellular chloride concentration. Exerts its function also by modulating the activity of other ion channels and transporters. Contributes to the regulation of the pH and the ion content of the epithelial fluid layer. Modulates the activity of the epithelial sodium channel (ENaC) complex, in part by regulating the cell surface expression of the ENaC complex. May regulate bicarbonate secretion and salvage in epithelial cells by regulating the transporter SLC4A7. Can inhibit the chloride channel activity of ANO1. Plays a role in the chloride and bicarbonate homeostasis during sperm epididymal maturation and capacitation. The protein is Cystic fibrosis transmembrane conductance regulator of Rhinolophus ferrumequinum (Greater horseshoe bat).